A 160-amino-acid chain; its full sequence is Transcription elongation factor GreA (160 aa).

Positions 2 to 84 (KNTVNDKILL…SKAKIIKADL (83 aa)) form a coiled coil.

The protein belongs to the GreA/GreB family.

Necessary for efficient RNA polymerase transcription elongation past template-encoded arresting sites. The arresting sites in DNA have the property of trapping a certain fraction of elongating RNA polymerases that pass through, resulting in locked ternary complexes. Cleavage of the nascent transcript by cleavage factors such as GreA or GreB allows the resumption of elongation from the new 3'terminus. GreA releases sequences of 2 to 3 nucleotides. The protein is Transcription elongation factor GreA of Mesomycoplasma hyopneumoniae (strain 232) (Mycoplasma hyopneumoniae).